The chain runs to 206 residues: Flavin prenyltransferase UbiX (206 aa).

FMN contacts are provided by residues Gly-11–Ser-13, Ser-37, Ser-103–Thr-106, and Arg-138. Residues Tyr-168 and Arg-184 each coordinate dimethylallyl phosphate.

Belongs to the UbiX/PAD1 family.

It catalyses the reaction dimethylallyl phosphate + FMNH2 = prenylated FMNH2 + phosphate. Flavin prenyltransferase that catalyzes the synthesis of the prenylated FMN cofactor (prenyl-FMN) for 4-hydroxy-3-polyprenylbenzoic acid decarboxylase UbiD. The prenyltransferase is metal-independent and links a dimethylallyl moiety from dimethylallyl monophosphate (DMAP) to the flavin N5 and C6 atoms of FMN. This Synechocystis sp. (strain ATCC 27184 / PCC 6803 / Kazusa) protein is Flavin prenyltransferase UbiX.